The chain runs to 403 residues: Cysteine desulfurase IscS (403 aa).

Pyridoxal 5'-phosphate contacts are provided by residues 75-76 (AT), N155, Q183, and 203-205 (SAH). K206 carries the N6-(pyridoxal phosphate)lysine modification. Position 243 (T243) interacts with pyridoxal 5'-phosphate. The active-site Cysteine persulfide intermediate is the C328. C328 serves as a coordination point for [2Fe-2S] cluster.

Belongs to the class-V pyridoxal-phosphate-dependent aminotransferase family. NifS/IscS subfamily. Homodimer. Forms a heterotetramer with IscU, interacts with other sulfur acceptors. Pyridoxal 5'-phosphate is required as a cofactor.

The protein localises to the cytoplasm. It catalyses the reaction (sulfur carrier)-H + L-cysteine = (sulfur carrier)-SH + L-alanine. It participates in cofactor biosynthesis; iron-sulfur cluster biosynthesis. In terms of biological role, master enzyme that delivers sulfur to a number of partners involved in Fe-S cluster assembly, tRNA modification or cofactor biosynthesis. Catalyzes the removal of elemental sulfur atoms from cysteine to produce alanine. Functions as a sulfur delivery protein for Fe-S cluster synthesis onto IscU, an Fe-S scaffold assembly protein, as well as other S acceptor proteins. The chain is Cysteine desulfurase IscS from Psychromonas ingrahamii (strain DSM 17664 / CCUG 51855 / 37).